Here is a 272-residue protein sequence, read N- to C-terminus: Putative pyruvate, phosphate dikinase regulatory protein (272 aa).

Glycine 149–threonine 156 provides a ligand contact to ADP.

It belongs to the pyruvate, phosphate/water dikinase regulatory protein family. PDRP subfamily.

It carries out the reaction N(tele)-phospho-L-histidyl/L-threonyl-[pyruvate, phosphate dikinase] + ADP = N(tele)-phospho-L-histidyl/O-phospho-L-threonyl-[pyruvate, phosphate dikinase] + AMP + H(+). It catalyses the reaction N(tele)-phospho-L-histidyl/O-phospho-L-threonyl-[pyruvate, phosphate dikinase] + phosphate + H(+) = N(tele)-phospho-L-histidyl/L-threonyl-[pyruvate, phosphate dikinase] + diphosphate. Bifunctional serine/threonine kinase and phosphorylase involved in the regulation of the pyruvate, phosphate dikinase (PPDK) by catalyzing its phosphorylation/dephosphorylation. In Lactiplantibacillus plantarum (strain ATCC BAA-793 / NCIMB 8826 / WCFS1) (Lactobacillus plantarum), this protein is Putative pyruvate, phosphate dikinase regulatory protein.